The sequence spans 399 residues: Developmentally-regulated G-protein 2 (399 aa).

The OBG-type G domain occupies 63-288 (GRVALIGFPS…LLARMWDEMG (226 aa)). GTP-binding positions include 69 to 76 (GFPSVGKS), 115 to 119 (DLPGI), and 246 to 249 (NKID). The region spanning 288 to 366 (GLVRVYSKPQ…EDEDVVQIVK (79 aa)) is the TGS domain. The segment at 372–399 (EGGRGRFKSHSNAPARIADREKKAPLKQ) is disordered. The segment covering 388–399 (IADREKKAPLKQ) has biased composition (basic and acidic residues).

The protein belongs to the TRAFAC class OBG-HflX-like GTPase superfamily. OBG GTPase family.

Its subcellular location is the cytoplasm. Its function is as follows. Binds GDP and GTP, and has low GTPase activity. This chain is Developmentally-regulated G-protein 2 (DRG2), found in Arabidopsis thaliana (Mouse-ear cress).